Reading from the N-terminus, the 152-residue chain is Nucleoside diphosphate kinase B (152 aa).

The tract at residues 1–66 (MANLERTFIA…DRPFFPGLVK (66 aa)) is interaction with AKAP13. Lys-12, Phe-60, Arg-88, Thr-94, Arg-105, and Asn-115 together coordinate ATP. Residue His-118 is the Pros-phosphohistidine intermediate of the active site.

It belongs to the NDK family. Hexamer of two different chains: An and B (A6, A5B, A4B2, A3B3, A2B4, AB5, B6). Interacts with CAPN8. Interacts with AKAP13. Interacts with ITGB1BP1 (via C-terminal domain region). Interacts with BCL2L10. Mg(2+) serves as cofactor.

Its subcellular location is the cytoplasm. It is found in the cell projection. The protein localises to the lamellipodium. It localises to the ruffle. The protein resides in the nucleus. The enzyme catalyses a 2'-deoxyribonucleoside 5'-diphosphate + ATP = a 2'-deoxyribonucleoside 5'-triphosphate + ADP. It catalyses the reaction a ribonucleoside 5'-diphosphate + ATP = a ribonucleoside 5'-triphosphate + ADP. The catalysed reaction is ATP + protein L-histidine = ADP + protein N-phospho-L-histidine.. Major role in the synthesis of nucleoside triphosphates other than ATP. The ATP gamma phosphate is transferred to the NDP beta phosphate via a ping-pong mechanism, using a phosphorylated active-site intermediate. Negatively regulates Rho activity by interacting with AKAP13/LBC. Acts as a transcriptional activator of the MYC gene; binds DNA non-specifically. Binds to both single-stranded guanine- and cytosine-rich strands within the nuclease hypersensitive element (NHE) III(1) region of the MYC gene promoter. Does not bind to duplex NHE III(1). Has G-quadruplex (G4) DNA-binding activity, which is independent of its nucleotide-binding and kinase activity. Binds both folded and unfolded G4 with similar low nanomolar affinities. Stabilizes folded G4s regardless of whether they are prefolded or not. Exhibits histidine protein kinase activity. This chain is Nucleoside diphosphate kinase B (NME2), found in Pongo abelii (Sumatran orangutan).